The primary structure comprises 449 residues: Xylose isomerase (449 aa).

Active-site residues include His103 and Asp106. Mg(2+)-binding residues include Glu234, Glu270, His273, Asp298, Asp309, Asp311, and Asp342.

This sequence belongs to the xylose isomerase family. Homotetramer. Requires Mg(2+) as cofactor.

Its subcellular location is the cytoplasm. The catalysed reaction is alpha-D-xylose = alpha-D-xylulofuranose. This Levilactobacillus brevis (Lactobacillus brevis) protein is Xylose isomerase.